We begin with the raw amino-acid sequence, 684 residues long: MSISITLHRSGTSRTQQVDTTTTGLDLFGSDRAVVAMRVDGNLVDLQRELHDGAEVEPVEATSEDGLNIIRHSATHVMAQAVQQLYPEVNLGIGPFITDGFYYDFGNIEPVTPEVLSELEKRMKRIVKENQRFVRRVTTEESAREELADQPYKLELIGTKGKGAEGASVEVGGGELTIYDNVRRNGEVAWKDLCRGPHVPSTKYLANTFALTKFSAAYWKGDQANDQLQRIYGTAWASREGLAAYQQRIKEAERRDHRKLGAELDLFSFPEEIGPGLVVFHPKGAMLRHLIEEHVIARHMEAGFNFVHTPEITKGGLFHTSGHLPYYADTMFPPMLVDEERDEEGNVTRAGQEYYLKAMNCPMHNLIFRSRGRSYRELPLRFFEMGHDYRYEKSGVVHGLTRMRGFAQDDSHTYCTREQAPGEIKKQIEFFLSILADFGLNDFYLELSTRESDSAKKEKFIGSDEDWQVATDTLDQVCRSTGLQLVPDPGGAAFYGPKVSVQVRDAIGRTWQMSTIQYDFNQPERFDLEYAAADGTHQRPIMLHSAKLGSVERFIGVLTEHYAGAFPVWLSPVQVRLVPVAEAFNDYVTGFAEVLGSRGIRVETDLSSDRFGKKIRNASKDKVPFILIAGGEDAEAGAVSFRLRDGSQVNGVVLDEAVRIIAAWDSRHRNDDPTAETLRGVVDD.

The 60-residue stretch at 1 to 60 (MSISITLHRSGTSRTQQVDTTTTGLDLFGSDRAVVAMRVDGNLVDLQRELHDGAEVEPVE) folds into the TGS domain. The catalytic stretch occupies residues 256 to 567 (DHRKLGAELD…LTEHYAGAFP (312 aa)). Residues Cys-361, His-412, and His-544 each contribute to the Zn(2+) site.

This sequence belongs to the class-II aminoacyl-tRNA synthetase family. Homodimer. The cofactor is Zn(2+).

It localises to the cytoplasm. The catalysed reaction is tRNA(Thr) + L-threonine + ATP = L-threonyl-tRNA(Thr) + AMP + diphosphate + H(+). Catalyzes the attachment of threonine to tRNA(Thr) in a two-step reaction: L-threonine is first activated by ATP to form Thr-AMP and then transferred to the acceptor end of tRNA(Thr). Also edits incorrectly charged L-seryl-tRNA(Thr). The polypeptide is Threonine--tRNA ligase (Cutibacterium acnes (strain DSM 16379 / KPA171202) (Propionibacterium acnes)).